The sequence spans 523 residues: Asparagine--tRNA ligase (523 aa).

Residues 329–350 (SARGDTPLAARSTARTPPVRTP) form a disordered region.

Belongs to the class-II aminoacyl-tRNA synthetase family. In terms of assembly, homodimer.

The protein localises to the cytoplasm. The catalysed reaction is tRNA(Asn) + L-asparagine + ATP = L-asparaginyl-tRNA(Asn) + AMP + diphosphate + H(+). The sequence is that of Asparagine--tRNA ligase from Treponema pallidum (strain Nichols).